A 311-amino-acid chain; its full sequence is Probable manganese-dependent inorganic pyrophosphatase (311 aa).

Residues His9, Asp13, Asp15, Asp77, His99, and Asp151 each contribute to the Mn(2+) site.

Belongs to the PPase class C family. It depends on Mn(2+) as a cofactor.

The protein localises to the cytoplasm. The catalysed reaction is diphosphate + H2O = 2 phosphate + H(+). The chain is Probable manganese-dependent inorganic pyrophosphatase from Streptococcus pneumoniae (strain JJA).